The primary structure comprises 508 residues: MLSLIIAACCVTVALAGTFSNPTCAPGRNTIVHLFEWKWTDIAKECERFLGPNGFCGVQISPPNENRLVNNRPWWERYQPVSYKLQTRSGSEDQLRDMISRCNRVNVRIYSDTVINHMTGVGGSGTGTAGSHWNGDTLSYPGVPFSAWDFNTGNECHSSDMNIHDYNNAEEIRNCRLVSLADLKLSKNYVREEITQYMNHLIDLGVAGFRIDAAKHMWPGDLRAMFGTLHDLNSAVFGSGRKPFIFQEVIDMGGEPISASEYTGIGRVTNFIFGVKLGQVFRNENKASNLHNWGEAWGMPNSNDVVVFIDNHDNQRGHGGGGGPLTHFEPRPYKLATAFMLAHPYGFTRLMSSYNFDRSNTDQGPPHNGDNINDVTINADLTCGNGWTCEHRWREIYNMVAFRNIVMGQNLQHWWDNGNYQIAFGRGNKGFIAMNMDNHNLDQTLQTGLPAGTYCDVISGSYDGSSCSGTEIQVGNDGNAHFSISNSSDDPMIAIHVGAKKGQPKVTT.

The signal sequence occupies residues 1 to 19; it reads MLSLIIAACCVTVALAGTF. An intrachain disulfide couples cysteine 46 to cysteine 102. 3 residues coordinate Ca(2+): asparagine 116, arginine 173, and aspartate 182. A disulfide bridge connects residues cysteine 156 and cysteine 175. Arginine 210 serves as a coordination point for chloride. The active-site Nucleophile is the aspartate 212. A Ca(2+)-binding site is contributed by histidine 216. Residue glutamate 248 is the Proton donor of the active site. Residues asparagine 311 and arginine 349 each contribute to the chloride site. Disulfide bonds link cysteine 383–cysteine 389 and cysteine 455–cysteine 467.

It belongs to the glycosyl hydrolase 13 family. As to quaternary structure, monomer. Requires Ca(2+) as cofactor. The cofactor is chloride.

It carries out the reaction Endohydrolysis of (1-&gt;4)-alpha-D-glucosidic linkages in polysaccharides containing three or more (1-&gt;4)-alpha-linked D-glucose units.. The sequence is that of Alpha-amylase from Pecten maximus (King scallop).